Reading from the N-terminus, the 1135-residue chain is MATSYSANNGQNEEYTFDAFEDGSSKLVGEQQLTKLNQFAVDYAQQIWKIEEALDETLNEVWDINIDPVSIYNKPHEQLDLIELVKTDHKIFNKVILVFSSICNQTRILKETAESKFYSPLTVFGEITGESSEGDVQIEVGKLLPFMIDLSAFVNRCYSLIRNIISQFASIYQSQKNIHTQFFKNVHLQAVYYSMIDIFSVLINLDSIITQNTALDSSWGRYLRMVKSVKQEPNKYSVSGEEDKLWQLEKLLLSLKGQLLEGFIFQSCIQQEFDFPGVIDVKGNKVLKAEFQYNVKVLWSMFGTKIMDSSELNLRERFPGFMGLYAFYIALFKDITDKSFFKQVWEVTKRVPMVSINVNVFWFPADFIQQLMPGMIKIVGSTFNHMEIRRDYLRNVDKEFSGRVKSYYLQVSRWMVRMESSQTRGGTLWDVSLSKVGQIIQGVQLSYHISHLLKTMIGLHMHLTAPLKSSDVRKLFQCAEMLKSIENTFHRRSAMISAHISMMVQQLTDIINEKLNVVRSKYAGRSNYSEIELDVIVALSLCSDLLCGVATNERITVVRLCLNVIYQSNILKENDIEELRLHIKRLEFISDIGKIVKASCDCSILFWSRDLFPTYLQFLYQNPSQATSLQYTLTGLKDVVSVLDKAIHVDNAKQRLIDVYRNEMEEMIDKNIIQPLGKDVETDLRLHIHAFLNIEEKDPFKTGIKEFGKFLELKPLRFFDRTIDIKSRISHYLDQTFYNLNTVALFDWKTYSEMRNMAFYKYGLQLLEVHLPGSTLEQGLDVLEIMRNIHIFVSRYNYNLNNQIFIQRSSNSKTLNTINITHISNSIRTHGSGIMNTTINFAYRFLVQKFSIFSEFLFDDQIKSKLYKNIKYFRENKEQLNNMYPSELVTELERDIRQLGVSETGLTFLDHFRLLITHIGNAMGYIRLVRSGGLHYCSNAIKFVPDLKKIPKFQDLTSKDALSPETIQASTNLDSIIHNLSNNLSEGTEYFKMLVNVFATEFRNIANQHLKNFYIIVPALASNYIDHMINSKDKLFKKSKAIGAEALLFTDDGFAIGLAYILKLLDQNKDFDSLHWFDRIQLKCETDQKRMLAEANAKGIKEDQNHLAIKKIQNFQQEYELFKYSFSGSRIFFKD.

N-acetylalanine is present on alanine 2.

It belongs to the SWIP family. Probable component of the WASH complex.

This is WASH complex subunit 4 from Dictyostelium discoideum (Social amoeba).